A 176-amino-acid polypeptide reads, in one-letter code: Lipoprotein signal peptidase (176 aa).

Transmembrane regions (helical) follow at residues 26–46, 60–80, 82–102, and 107–127; these read LWMA…IVIV, FFNL…ADAG, WQRW…VWLL, and GQKL…GNVV. Catalysis depends on residues Asp-137 and Asp-155. The chain crosses the membrane as a helical span at residues 147-167; the sequence is HWPAFNVADCAITVGAVLLIV.

The protein belongs to the peptidase A8 family.

Its subcellular location is the cell inner membrane. The catalysed reaction is Release of signal peptides from bacterial membrane prolipoproteins. Hydrolyzes -Xaa-Yaa-Zaa-|-(S,diacylglyceryl)Cys-, in which Xaa is hydrophobic (preferably Leu), and Yaa (Ala or Ser) and Zaa (Gly or Ala) have small, neutral side chains.. It functions in the pathway protein modification; lipoprotein biosynthesis (signal peptide cleavage). This protein specifically catalyzes the removal of signal peptides from prolipoproteins. This chain is Lipoprotein signal peptidase, found in Cupriavidus pinatubonensis (strain JMP 134 / LMG 1197) (Cupriavidus necator (strain JMP 134)).